Consider the following 250-residue polypeptide: Probable transcriptional regulatory protein Plut_1643 (250 aa).

It belongs to the TACO1 family.

The protein localises to the cytoplasm. The polypeptide is Probable transcriptional regulatory protein Plut_1643 (Chlorobium luteolum (strain DSM 273 / BCRC 81028 / 2530) (Pelodictyon luteolum)).